The following is a 322-amino-acid chain: DNA repair and recombination protein RadA (322 aa).

ATP is bound at residue 105-112 (GMYGSGKT).

The protein belongs to the eukaryotic RecA-like protein family.

Functionally, involved in DNA repair and in homologous recombination. Binds and assemble on single-stranded DNA to form a nucleoprotein filament. Hydrolyzes ATP in a ssDNA-dependent manner and promotes DNA strand exchange between homologous DNA molecules. The sequence is that of DNA repair and recombination protein RadA from Methanococcus maripaludis (strain C6 / ATCC BAA-1332).